The following is a 940-amino-acid chain: Pentatricopeptide repeat-containing protein At5g14770, mitochondrial (940 aa).

Residues 1–24 (MIMIRIWNNYKGKYRFFLSNCRSF) constitute a mitochondrion transit peptide. PPR repeat units lie at residues 59-93 (YVSL…GVVP), 94-129 (DSRL…GVSP), 130-161 (DVFA…VISI), 162-196 (DTVT…GILP), 197-231 (DTVS…NLIT), 241-259 (NLHA…GFDP), 260-294 (DVVT…SVYP), 295-329 (NHVT…GIPV), 330-364 (DLVV…NQVP), 365-399 (NVVT…SVIP), 400-434 (NVVT…NVVP), 435-469 (NGFT…GVEE), 470-504 (NNYI…GVTL), 505-539 (DQIN…GMPW), 540-573 (DVVS…GIEP), 574-608 (DIAT…GIKP), 609-643 (SLMS…EIHP), 644-678 (NLTT…GIKL), 679-713 (SRQV…GFIP), 714-748 (DTVT…GISP), 749-783 (NVAT…GMRP), 784-818 (DDFT…GLVP), 819-853 (KTST…GVSP), and 854-891 (NTST…GLLK).

The protein belongs to the PPR family. P subfamily.

Its subcellular location is the mitochondrion. This Arabidopsis thaliana (Mouse-ear cress) protein is Pentatricopeptide repeat-containing protein At5g14770, mitochondrial.